Consider the following 155-residue polypeptide: Transcriptional repressor NrdR (155 aa).

A zinc finger spans residues 3–34 (CPYCGHLEDRVVDSRETQDGQATRRRRACLSC). The ATP-cone domain occupies 49 to 139 (PQVVKKDGRR…VYRAFRDVGE (91 aa)).

The protein belongs to the NrdR family. Zn(2+) serves as cofactor.

In terms of biological role, negatively regulates transcription of bacterial ribonucleotide reductase nrd genes and operons by binding to NrdR-boxes. The chain is Transcriptional repressor NrdR from Anaeromyxobacter dehalogenans (strain 2CP-1 / ATCC BAA-258).